A 474-amino-acid polypeptide reads, in one-letter code: MIIYFAVITCSLKLCRSYYKMLLNVSHTIQCVFSRMSWYTLAVILSTLVTIHASQGPEKFTLATAIVLKRGEDITWSVSRENLKYNYRTVVDTTSKAFAVWHTAGLNFRFVYNYSEAMIRISFKRRFHGEIGYDFDGLGSLLAHAYLPNQGDLSSEIHLDNDEIFSFSMKDSDYEGDNAPTSYFWTVLHEIGHSLGVQHSASPSSIMYGWYKSRSFGNGTIVLPKDDANAIHQLYFSNTKQYAAIPKFEKNKVVTTTPVPPADRSESTTNTTITTCFSFDSLSEIKHDATKDSISAYCAGVYDAISYVRGDLYVFVGDLHWRFDTSGMLHNGYPQPTGATWRLPSGSQVNSVFEWMQYIVIQTGKRYNLFVGTDFVRSVNFKVAPSITFASNNRVYAAFLGKLKDITGHLLRRKNLRWRYLPPIQLLQNELRAATDILVASNGMYIFKSGVHGVVVNGVVEHYKLNKGVWSNCR.

Positions 1–17 (MIIYFAVITCSLKLCRS) are cleaved as a signal peptide. His-189 provides a ligand contact to Zn(2+). Glu-190 is an active-site residue. Zn(2+) contacts are provided by His-193 and His-199. A Hemopexin repeat occupies 299-344 (AGVYDAISYVRGDLYVFVGDLHWRFDTSGMLHNGYPQPTGATWRLP).

Belongs to the peptidase M10A family. It depends on Zn(2+) as a cofactor.

This Heliothis virescens ascovirus 3e (HvAV-3e) protein is Putative matrix metalloproteinase.